Here is a 276-residue protein sequence, read N- to C-terminus: Undecaprenyl-diphosphatase (276 aa).

Transmembrane regions (helical) follow at residues 43–63 (RAMA…VWEF), 85–105 (GNLL…ADLI), 109–129 (LFNP…MLWA), 183–203 (AATE…AVYS), 214–234 (ADLP…MIAV), and 249–269 (FAWY…FGWV).

Belongs to the UppP family.

The protein resides in the cell inner membrane. The catalysed reaction is di-trans,octa-cis-undecaprenyl diphosphate + H2O = di-trans,octa-cis-undecaprenyl phosphate + phosphate + H(+). In terms of biological role, catalyzes the dephosphorylation of undecaprenyl diphosphate (UPP). Confers resistance to bacitracin. The sequence is that of Undecaprenyl-diphosphatase from Pseudomonas putida (strain GB-1).